The chain runs to 326 residues: Putative ribose-phosphate pyrophosphokinase 2 (326 aa).

Residues 43 to 45 (DGE) and 102 to 103 (RQ) contribute to the ATP site. H136 provides a ligand contact to Mg(2+). D-ribose 5-phosphate-binding positions include D225 and 229–233 (NTGKT).

In terms of assembly, homohexamer. It depends on Mg(2+) as a cofactor.

The protein resides in the cytoplasm. It carries out the reaction D-ribose 5-phosphate + ATP = 5-phospho-alpha-D-ribose 1-diphosphate + AMP + H(+). The protein operates within metabolic intermediate biosynthesis; 5-phospho-alpha-D-ribose 1-diphosphate biosynthesis; 5-phospho-alpha-D-ribose 1-diphosphate from D-ribose 5-phosphate (route I): step 1/1. Its function is as follows. Involved in the biosynthesis of the central metabolite phospho-alpha-D-ribosyl-1-pyrophosphate (PRPP) via the transfer of pyrophosphoryl group from ATP to 1-hydroxyl of ribose-5-phosphate (Rib-5-P). The sequence is that of Putative ribose-phosphate pyrophosphokinase 2 from Streptococcus pyogenes serotype M6 (strain ATCC BAA-946 / MGAS10394).